The sequence spans 365 residues: MKQEKERILKLVEEGKLTAQEALTLIEKLDSDYKEKEEKITALSVHVHDEEEPFTTAKKESGKPSLGAKLFDWIDSAVKKVKEVDLDLNFGHAYDVQHIFQFKDTDFSSVELQIANGSVNIVPWEDDDIRAECQAKVYRADSQDAARHAFLQHIECEIKGNKFFIRTEKKTMKTNVTLYIPQKEYDKIRVKLFNGPVRGEHLHVKEFSAKTTNGVLSFSYLTAEKAIAETANGQIKLASHSCGTIEAETINGLIDLRGKSESIDVQSFNGNIAINVTESDCRSIYAKTTTGNVELAIPDDLAVKAELKSNLGTLSHELMDVEMLKEKNDTIQKEMMFTSNQAHDQNITVFSESLTGAIKLKYSQR.

Positions 18–46 (TAQEALTLIEKLDSDYKEKEEKITALSVH) form a coiled coil.

This is an uncharacterized protein from Bacillus subtilis (strain 168).